The chain runs to 127 residues: Large ribosomal subunit protein uL22 (127 aa).

Part of the 50S ribosomal subunit.

In terms of biological role, this protein binds specifically to 23S rRNA; its binding is stimulated by other ribosomal proteins, e.g. L4, L17, and L20. It is important during the early stages of 50S assembly. It makes multiple contacts with different domains of the 23S rRNA in the assembled 50S subunit and ribosome. Functionally, the globular domain of the protein is located near the polypeptide exit tunnel on the outside of the subunit, while an extended beta-hairpin is found that lines the wall of the exit tunnel in the center of the 70S ribosome. The protein is Large ribosomal subunit protein uL22 of Rhodopseudomonas palustris (strain ATCC BAA-98 / CGA009).